A 315-amino-acid chain; its full sequence is Protoheme IX farnesyltransferase 1 (315 aa).

Transmembrane regions (helical) follow at residues 30–50 (PGIIISNSLAALGGFWIAWIQ), 56–76 (GGPGIFAAMAVAMIGTALVMA), 106–126 (IPPPVMILYGTCLGACGFIML), 132–152 (LTAVLGLLAFLLYAVVYTLWF), 162–182 (VGSFPGAAPPLIGYCALTGYI), 186–206 (AILLYAIMFLWQPPHFWAIGI), 249–269 (LYIDVSPFYTASALLLGAIWL), and 289–309 (FFYSIVYFSLLFLILMADSFI).

It belongs to the UbiA prenyltransferase family. Protoheme IX farnesyltransferase subfamily. Interacts with CtaA.

The protein localises to the cell membrane. It catalyses the reaction heme b + (2E,6E)-farnesyl diphosphate + H2O = Fe(II)-heme o + diphosphate. The protein operates within porphyrin-containing compound metabolism; heme O biosynthesis; heme O from protoheme: step 1/1. Its function is as follows. Converts heme B (protoheme IX) to heme O by substitution of the vinyl group on carbon 2 of heme B porphyrin ring with a hydroxyethyl farnesyl side group. This is Protoheme IX farnesyltransferase 1 from Bacillus velezensis (strain DSM 23117 / BGSC 10A6 / LMG 26770 / FZB42) (Bacillus amyloliquefaciens subsp. plantarum).